We begin with the raw amino-acid sequence, 503 residues long: ATP synthase subunit alpha (503 aa).

ATP is bound at residue 169–176 (GDRGTGKT).

It belongs to the ATPase alpha/beta chains family. F-type ATPases have 2 components, CF(1) - the catalytic core - and CF(0) - the membrane proton channel. CF(1) has five subunits: alpha(3), beta(3), gamma(1), delta(1), epsilon(1). CF(0) has three main subunits: a(1), b(2) and c(9-12). The alpha and beta chains form an alternating ring which encloses part of the gamma chain. CF(1) is attached to CF(0) by a central stalk formed by the gamma and epsilon chains, while a peripheral stalk is formed by the delta and b chains.

The protein resides in the cell inner membrane. It catalyses the reaction ATP + H2O + 4 H(+)(in) = ADP + phosphate + 5 H(+)(out). Its function is as follows. Produces ATP from ADP in the presence of a proton gradient across the membrane. The alpha chain is a regulatory subunit. The chain is ATP synthase subunit alpha from Leptospira interrogans serogroup Icterohaemorrhagiae serovar copenhageni (strain Fiocruz L1-130).